Reading from the N-terminus, the 672-residue chain is Probable copper-transporting P-type ATPase B (672 aa).

The segment covering 1 to 17 (MEHHSHQEHENHTSHGN) has biased composition (basic and acidic residues). Positions 1–22 (MEHHSHQEHENHTSHGNHEHHH) are disordered. 6 consecutive transmembrane segments (helical) span residues 30 to 50 (FFIS…MGVK), 55 to 75 (ISFT…FFYG), 93 to 113 (GMMT…LYAF), 125 to 145 (TMDF…GHWI), 282 to 302 (GYLF…WMLI), and 313 to 333 (LVTV…PLVT). D365 acts as the 4-aspartylphosphate intermediate in catalysis. D563 and D567 together coordinate Mg(2+). The next 2 membrane-spanning stretches (helical) occupy residues 621 to 643 (LWWG…ASIG) and 647 to 669 (SPAV…AFTL).

This sequence belongs to the cation transport ATPase (P-type) (TC 3.A.3) family. Type IB subfamily.

The protein resides in the cell membrane. It carries out the reaction Cu(+)(in) + ATP + H2O = Cu(+)(out) + ADP + phosphate + H(+). Its function is as follows. Involved in copper transport. The chain is Probable copper-transporting P-type ATPase B (copB) from Staphylococcus aureus.